Consider the following 479-residue polypeptide: Leucine-rich repeat-containing protein 74A (479 aa).

The span at 1 to 10 shows a compositional bias: acidic residues; sequence MDDDDIEPLE. Residues 1–29 form a disordered region; sequence MDDDDIEPLEYETKDETEAALAPQSSEDT. LRR repeat units follow at residues 119-140, 147-167, 176-197, 204-225, 232-253, 260-281, 288-309, and 316-336; these read TVLKLELEDNSIQEEGILSLME, YLQELNVSDNNLGLEGARIIS, SLWKLKLSGNKFKEECALLLCQ, RIRSLNLSHNEFSDTAGEYLGQ, GLQSLNLSWNHFNVRGAVALCN, TLKKLDVSMNGFGNDGALALGD, CLVYVDVSRNGITNEGASRISK, and CLQVLKLFLNPVSLEGAYSLI.

This Rattus norvegicus (Rat) protein is Leucine-rich repeat-containing protein 74A.